The primary structure comprises 3916 residues: Fusarin C synthetase (3916 aa).

Residues 9-440 (KEPIAIIGTS…GTNVHAIIEQ (432 aa)) enclose the Ketosynthase family 3 (KS3) domain. Active-site for beta-ketoacyl synthase activity residues include Cys-182, His-319, and His-360. The segment at 548 to 869 (VFTGQGAQWP…VTRNIHDVEA (322 aa)) is malonyl-CoA:ACP transacylase (MAT) domain. Positions 935-1068 (HPLLGARSVE…GQLRVEFSSL (134 aa)) are N-terminal hotdog fold. The interval 935-1228 (HPLLGARSVE…GLTCTSLLRP (294 aa)) is dehydratase (DH) domain. The region spanning 935–1231 (HPLLGARSVE…CTSLLRPGPS (297 aa)) is the PKS/mFAS DH domain. Residue His-967 is the Proton acceptor; for dehydratase activity of the active site. Residues 1084-1231 (LTSVDMERFY…CTSLLRPGPS (148 aa)) form a C-terminal hotdog fold region. Asp-1141 serves as the catalytic Proton donor; for dehydratase activity. The tract at residues 1350–1584 (VGENLPAVVR…YMTSVMLSQA (235 aa)) is C-methyltransferase (CMeT) domain. Residues 2092-2266 (TYLLIGFTGG…AASVMHIGMV (175 aa)) form a ketoreductase (KR) domain 1 region. The Carrier 1 domain maps to 2372-2449 (EILAVVEEEF…ELCSTVVSHL (78 aa)). Ser-2409 is modified (O-(pantetheine 4'-phosphoryl)serine). Positions 2482–2511 (ASPTENEPFTIRNSPNSTQVTSESGVDEET) are disordered. A compositionally biased stretch (polar residues) spans 2486 to 2505 (ENEPFTIRNSPNSTQVTSES). The segment at 2522–2806 (PLSFAQERLW…VNLLPLRLKL (285 aa)) is condensation. The interval 2973 to 3385 (FEKCVVNQPD…RIAGDSQIKL (413 aa)) is adenylation. The 78-residue stretch at 3493-3570 (KPLTETQERL…EMAAKIDGFT (78 aa)) folds into the Carrier 2 domain. Ser-3530 is subject to O-(pantetheine 4'-phosphoryl)serine. The segment at 3612–3833 (LTGATGFLGV…DFVPVDVVAA (222 aa)) is thiolester reductase (R) domain.

The protein in the C-terminal section; belongs to the NRP synthetase family.

It participates in mycotoxin biosynthesis. Its function is as follows. Fusarin C synthetase; part of the gene cluster that mediates the biosynthesis of the mycotoxin fusarin C. Within the cluster, FUS1, FUS2, FUS8 and FUS9 are sufficient for fusarin production. The roles of the other FUS members are yet undetermined. The fusarin C synthetase FUS1 is responsible for the condensation of one acetyl-coenzyme A (CoA) unit with six malonyl-CoA units and the amide linkage of the arising heptaketide and homoserine, subsequently releasing the first intermediate, prefusarin, as an alcohol with an open ring structure. The cytochrome P450 monooxygenase FUS8 participates in multiple oxidation processes at carbon C-20 and is able to use the FUS1 product as substrate, resulting in formation of 20-hydroxy-prefusarin. This reaction seems to be essential before the 2-pyrrolidone ring closure can be catalyzed by FUS2, generating 20-hydroxy-fusarin. FUS8 is able to further oxidizes carbon C-20 after ring closure, resulting in the formation of carboxy-fusarin C. As the last step, FUS9 methylates the hydroxyl group at C-21 to generate fusarin C. Fusarin C can then rearrange to epi-fusarin C, the (z)-isomers, and fusarin A and fusarin D. This is Fusarin C synthetase from Gibberella moniliformis (strain M3125 / FGSC 7600) (Maize ear and stalk rot fungus).